The following is a 474-amino-acid chain: Eukaryotic translation initiation factor 3 subunit L (474 aa).

The 195-residue stretch at D255–L449 folds into the PCI domain.

It belongs to the eIF-3 subunit L family. In terms of assembly, component of the eukaryotic translation initiation factor 3 (eIF-3) complex.

Its subcellular location is the cytoplasm. Its function is as follows. Component of the eukaryotic translation initiation factor 3 (eIF-3) complex, which is involved in protein synthesis of a specialized repertoire of mRNAs and, together with other initiation factors, stimulates binding of mRNA and methionyl-tRNAi to the 40S ribosome. The eIF-3 complex specifically targets and initiates translation of a subset of mRNAs involved in cell proliferation. This is Eukaryotic translation initiation factor 3 subunit L from Neurospora crassa (strain ATCC 24698 / 74-OR23-1A / CBS 708.71 / DSM 1257 / FGSC 987).